The following is a 198-amino-acid chain: ATP-dependent Clp protease proteolytic subunit (198 aa).

Catalysis depends on Ser-98, which acts as the Nucleophile. His-123 is a catalytic residue.

Belongs to the peptidase S14 family. As to quaternary structure, fourteen ClpP subunits assemble into 2 heptameric rings which stack back to back to give a disk-like structure with a central cavity, resembling the structure of eukaryotic proteasomes.

Its subcellular location is the cytoplasm. The catalysed reaction is Hydrolysis of proteins to small peptides in the presence of ATP and magnesium. alpha-casein is the usual test substrate. In the absence of ATP, only oligopeptides shorter than five residues are hydrolyzed (such as succinyl-Leu-Tyr-|-NHMec, and Leu-Tyr-Leu-|-Tyr-Trp, in which cleavage of the -Tyr-|-Leu- and -Tyr-|-Trp bonds also occurs).. Functionally, cleaves peptides in various proteins in a process that requires ATP hydrolysis. Has a chymotrypsin-like activity. Plays a major role in the degradation of misfolded proteins. The protein is ATP-dependent Clp protease proteolytic subunit of Bacillus velezensis (strain DSM 23117 / BGSC 10A6 / LMG 26770 / FZB42) (Bacillus amyloliquefaciens subsp. plantarum).